The primary structure comprises 111 residues: Probable 4-amino-4-deoxy-L-arabinose-phosphoundecaprenol flippase subunit ArnE (111 aa).

3 helical membrane passes run 36-56, 61-81, and 88-108; these read IVLWLGLALACLGLAMMLWLL, VPVGIAYPMLSLNFVWVTLAA, and PVSPRHWCGVAFIIGGIVILG. The EamA domain occupies 40 to 109; sequence LGLALACLGL…IIGGIVILGS (70 aa).

This sequence belongs to the ArnE family. As to quaternary structure, heterodimer of ArnE and ArnF.

Its subcellular location is the cell inner membrane. It participates in bacterial outer membrane biogenesis; lipopolysaccharide biosynthesis. Functionally, translocates 4-amino-4-deoxy-L-arabinose-phosphoundecaprenol (alpha-L-Ara4N-phosphoundecaprenol) from the cytoplasmic to the periplasmic side of the inner membrane. This is Probable 4-amino-4-deoxy-L-arabinose-phosphoundecaprenol flippase subunit ArnE from Shigella flexneri.